Consider the following 298-residue polypeptide: Protease HtpX homolog (298 aa).

2 helical membrane passes run 5-25 (IFLF…VLSV) and 45-65 (MALL…SLAI). H155 is a Zn(2+) binding site. E156 is a catalytic residue. H159 serves as a coordination point for Zn(2+). 2 helical membrane passes run 170–190 (LLQG…AWIA) and 204–224 (FIAM…VVFA). Position 230 (E230) interacts with Zn(2+).

This sequence belongs to the peptidase M48B family. The cofactor is Zn(2+).

It localises to the cell membrane. This is Protease HtpX homolog from Bacillus subtilis (strain 168).